Here is a 182-residue protein sequence, read N- to C-terminus: Interferon beta (182 aa).

An N-terminal signal peptide occupies residues 1–21 (MNNRWILHAAFLLCFSTTALS). Residue Y24 is modified to Phosphotyrosine. N-linked (GlcNAc...) asparagine glycosylation is found at N50, N90, and N97.

This sequence belongs to the alpha/beta interferon family. As to quaternary structure, monomer. This beta interferon does not have a disulfide bond.

The protein localises to the secreted. Its function is as follows. Type I interferon cytokine that plays a key role in the innate immune response to infection, developing tumors and other inflammatory stimuli. Signals via binding to high-affinity (IFNAR2) and low-affinity (IFNAR1) heterodimeric receptor, activating the canonical Jak-STAT signaling pathway resulting in transcriptional activation or repression of interferon-regulated genes that encode the effectors of the interferon response, such as antiviral proteins, regulators of cell proliferation and differentiation, and immunoregulatory proteins. Signals mostly via binding to a IFNAR1-IFNAR2 heterodimeric receptor, but can also function with IFNAR1 alone and independently of Jak-STAT pathways. Elicits a wide variety of responses, including antiviral and antibacterial activities, and can regulate the development of B-cells, myelopoiesis and lipopolysaccharide (LPS)-inducible production of tumor necrosis factor. Plays a role in neuronal homeostasis by regulating dopamine turnover and protecting dopaminergic neurons: acts by promoting neuronal autophagy and alpha-synuclein clearance, thereby preventing dopaminergic neuron loss. IFNB1 is more potent than interferon-alpha (IFN-alpha) in inducing the apoptotic and antiproliferative pathways required for control of tumor cell growth. This chain is Interferon beta, found in Mus musculus (Mouse).